We begin with the raw amino-acid sequence, 410 residues long: Histidine--tRNA ligase (410 aa).

This sequence belongs to the class-II aminoacyl-tRNA synthetase family. Homodimer.

It localises to the cytoplasm. It catalyses the reaction tRNA(His) + L-histidine + ATP = L-histidyl-tRNA(His) + AMP + diphosphate + H(+). The chain is Histidine--tRNA ligase from Elusimicrobium minutum (strain Pei191).